The primary structure comprises 324 residues: Acetyl-coenzyme A carboxylase carboxyl transferase subunit alpha (324 aa).

Residues 37 to 291 (ILEDKLENLE…NVVLQKTFEQ (255 aa)) enclose the CoA carboxyltransferase C-terminal domain.

It belongs to the AccA family. Acetyl-CoA carboxylase is a heterohexamer composed of biotin carboxyl carrier protein (AccB), biotin carboxylase (AccC) and two subunits each of ACCase subunit alpha (AccA) and ACCase subunit beta (AccD).

The protein localises to the cytoplasm. It catalyses the reaction N(6)-carboxybiotinyl-L-lysyl-[protein] + acetyl-CoA = N(6)-biotinyl-L-lysyl-[protein] + malonyl-CoA. It participates in lipid metabolism; malonyl-CoA biosynthesis; malonyl-CoA from acetyl-CoA: step 1/1. Functionally, component of the acetyl coenzyme A carboxylase (ACC) complex. First, biotin carboxylase catalyzes the carboxylation of biotin on its carrier protein (BCCP) and then the CO(2) group is transferred by the carboxyltransferase to acetyl-CoA to form malonyl-CoA. This chain is Acetyl-coenzyme A carboxylase carboxyl transferase subunit alpha, found in Bacillus cytotoxicus (strain DSM 22905 / CIP 110041 / 391-98 / NVH 391-98).